Consider the following 64-residue polypeptide: Large ribosomal subunit protein bL35 (64 aa).

The span at 1 to 24 (MPKMKSHRGACKRFKKTASGKVKR) shows a compositional bias: basic residues. The disordered stretch occupies residues 1–64 (MPKMKSHRGA…EKQIKRMILA (64 aa)). Positions 25–35 (ERMYGSHNLEK) are enriched in basic and acidic residues. A compositionally biased stretch (basic residues) spans 36 to 45 (KNRKRTRRLH).

Belongs to the bacterial ribosomal protein bL35 family.

The polypeptide is Large ribosomal subunit protein bL35 (Prosthecochloris aestuarii (strain DSM 271 / SK 413)).